Consider the following 317-residue polypeptide: tRNA dimethylallyltransferase (317 aa).

Residue 18–25 coordinates ATP; it reads GPTATGKT. 20–25 lines the substrate pocket; that stretch reads TATGKT. Interaction with substrate tRNA regions lie at residues 43–46, 167–171, and 281–288; these read DSAL, QRIQR, and KRQITWLR.

This sequence belongs to the IPP transferase family. In terms of assembly, monomer. Mg(2+) serves as cofactor.

The catalysed reaction is adenosine(37) in tRNA + dimethylallyl diphosphate = N(6)-dimethylallyladenosine(37) in tRNA + diphosphate. Its function is as follows. Catalyzes the transfer of a dimethylallyl group onto the adenine at position 37 in tRNAs that read codons beginning with uridine, leading to the formation of N6-(dimethylallyl)adenosine (i(6)A). In Alkalilimnicola ehrlichii (strain ATCC BAA-1101 / DSM 17681 / MLHE-1), this protein is tRNA dimethylallyltransferase.